Reading from the N-terminus, the 320-residue chain is MRQTKTGILLANLGTPDAPTPEAVKRYLKQFLSDRRVVDTPRLLWWPLLRGVILPLRSPRVAKLYQSIWMDGGSPLMVYSREQQQALAARLPDTPVALGMSYGSPSLESAVDELLASDVDHIVVLPLYPQYSCSTVGAVWDELGRILARKRRIPGISFIRDYADDGAYIDALAKSARESFARHGEPDVLLLSYHGIPQRYADEGDDYPQRCRDTTRELVSALGLPPEKVMMTFQSRFGREPWLTPYTDETLKMLGEKGTGHIQVMCPGFAADCLETLEEIAEQNREIFLEVGGKKYAYIPALNATPEHIDMMLKLTAPYR.

The Fe cation site is built by histidine 194 and glutamate 275.

The protein belongs to the ferrochelatase family. In terms of assembly, monomer.

The protein localises to the cytoplasm. The catalysed reaction is heme b + 2 H(+) = protoporphyrin IX + Fe(2+). The protein operates within porphyrin-containing compound metabolism; protoheme biosynthesis; protoheme from protoporphyrin-IX: step 1/1. In terms of biological role, catalyzes the ferrous insertion into protoporphyrin IX. In Salmonella paratyphi A (strain ATCC 9150 / SARB42), this protein is Ferrochelatase.